We begin with the raw amino-acid sequence, 397 residues long: Ribosomal RNA processing protein 1 homolog (397 aa).

Positions 334 to 343 (EAAEAARQEN) are enriched in basic and acidic residues. The tract at residues 334–366 (EAAEAARQENGDDVPDDEIAEVKKGNGKKTAVP) is disordered.

It belongs to the RRP1 family.

It localises to the nucleus. May be involved in the generation of 28S rRNA. The polypeptide is Ribosomal RNA processing protein 1 homolog (Caenorhabditis elegans).